Consider the following 518-residue polypeptide: MQLSVWTYEGPPHIGAMRIATAMRDVHYVLHAPQGDTYADLLFTMIERRDRRPPVTYTTFQARDLGGDTADLLQSAARAAYERFQPQAMLVGASCTAELIQDDPGGLAQALRLPIPVIPLELPAYQRKENWGASETFYRIVRALAASSADGSPRHERKAGARPVCNLLGPTALGFRHRDDLAEVTRQVVELGIEINVVAPWNATPADLARLPQADFNIVLYPEIALTAAQWLNRQFGQPYTKTIPIGVGATRDFIREVAGLAGVDAEPVLSRAESRLPWYSRSVDSTYLTGKRVFIFGDATHAVAAARVATQELGFEVVGLGTYAREFAREIREAAALYGIEPLITDDYLQVEARVSELRPELVLGTQMERHIAKRLGIPCAVISSPTHVQDFPARYSPQMGFEGANVLFDTWVHPLMMGLEEHLLGMFREDHEFADHAPSHLGAAPAAPPQQPQLRVVETVTSTELAWASDAERELTKIPFFVRGKARRNTERFARERNVNLITLETLYDAKAHFGR.

Asp36 is a binding site for [4Fe-4S] cluster. The active-site Proton donor is Asp285. 420 to 421 (GL) contacts substrate.

Belongs to the ChlB/BchB/BchZ family. In terms of assembly, protochlorophyllide reductase is composed of three subunits; BchL, BchN and BchB. Forms a heterotetramer of two BchB and two BchN subunits. [4Fe-4S] cluster is required as a cofactor.

The enzyme catalyses chlorophyllide a + oxidized 2[4Fe-4S]-[ferredoxin] + 2 ADP + 2 phosphate = protochlorophyllide a + reduced 2[4Fe-4S]-[ferredoxin] + 2 ATP + 2 H2O. Its pathway is porphyrin-containing compound metabolism; bacteriochlorophyll biosynthesis (light-independent). Its function is as follows. Component of the dark-operative protochlorophyllide reductase (DPOR) that uses Mg-ATP and reduced ferredoxin to reduce ring D of protochlorophyllide (Pchlide) to form chlorophyllide a (Chlide). This reaction is light-independent. The NB-protein (BchN-BchB) is the catalytic component of the complex. This is Light-independent protochlorophyllide reductase subunit B from Bradyrhizobium sp. (strain ORS 278).